A 285-amino-acid chain; its full sequence is 4-diphosphocytidyl-2-C-methyl-D-erythritol kinase (285 aa).

Residue Lys-10 is part of the active site. An ATP-binding site is contributed by 92-102 (PFGAGLGGGSS). Residue Asp-134 is part of the active site.

The protein belongs to the GHMP kinase family. IspE subfamily.

The enzyme catalyses 4-CDP-2-C-methyl-D-erythritol + ATP = 4-CDP-2-C-methyl-D-erythritol 2-phosphate + ADP + H(+). It functions in the pathway isoprenoid biosynthesis; isopentenyl diphosphate biosynthesis via DXP pathway; isopentenyl diphosphate from 1-deoxy-D-xylulose 5-phosphate: step 3/6. Functionally, catalyzes the phosphorylation of the position 2 hydroxy group of 4-diphosphocytidyl-2C-methyl-D-erythritol. The sequence is that of 4-diphosphocytidyl-2-C-methyl-D-erythritol kinase from Chloroherpeton thalassium (strain ATCC 35110 / GB-78).